The following is a 268-amino-acid chain: Ubiquinone biosynthesis protein COQ4 homolog, mitochondrial (268 aa).

Zn(2+) contacts are provided by histidine 171, aspartate 172, histidine 175, and glutamate 187.

The protein belongs to the COQ4 family. As to quaternary structure, component of a multi-subunit COQ enzyme complex. The cofactor is Zn(2+).

It localises to the mitochondrion inner membrane. The enzyme catalyses a 4-hydroxy-3-methoxy-5-(all-trans-polyprenyl)benzoate + H(+) = a 2-methoxy-6-(all-trans-polyprenyl)phenol + CO2. It participates in cofactor biosynthesis; ubiquinone biosynthesis. Lyase that catalyzes the C1-decarboxylation of 4-hydroxy-3-methoxy-5-(all-trans-polyprenyl)benzoic acid into 2-methoxy-6-(all-trans-polyprenyl)phenol during ubiquinone biosynthesis. The chain is Ubiquinone biosynthesis protein COQ4 homolog, mitochondrial from Drosophila erecta (Fruit fly).